Here is a 359-residue protein sequence, read N- to C-terminus: DNA integrity scanning protein DisA (359 aa).

The DAC domain maps to Asp-7–Ala-146. ATP contacts are provided by residues Gly-74, Leu-92, and Thr-105 to Thr-109.

It belongs to the DisA family. As to quaternary structure, homooctamer. The cofactor is Mg(2+).

It catalyses the reaction 2 ATP = 3',3'-c-di-AMP + 2 diphosphate. Its function is as follows. Participates in a DNA-damage check-point that is active prior to asymmetric division when DNA is damaged. DisA forms globular foci that rapidly scan along the chromosomes during sporulation, searching for lesions. When a lesion is present, DisA pauses at the lesion site. This triggers a cellular response that culminates in a temporary block in sporulation initiation. Also has diadenylate cyclase activity, catalyzing the condensation of 2 ATP molecules into cyclic di-AMP (c-di-AMP). c-di-AMP acts as a signaling molecule that couples DNA integrity with progression of sporulation. The rise in c-di-AMP level generated by DisA while scanning the chromosome, operates as a positive signal that advances sporulation; upon encountering a lesion, the DisA focus arrests at the damaged site and halts c-di-AMP synthesis. The polypeptide is DNA integrity scanning protein DisA (Frankia alni (strain DSM 45986 / CECT 9034 / ACN14a)).